Here is a 419-residue protein sequence, read N- to C-terminus: Phospholipase A1-IIgamma (419 aa).

Coiled coils occupy residues 1–21 (MKRK…EFAK) and 207–227 (NARD…KDEE). S236 functions as the Acyl-ester intermediate in the catalytic mechanism. Active-site charge relay system residues include S236, D302, and H339.

It belongs to the AB hydrolase superfamily. Lipase family. As to expression, expressed in seedlings, stems and siliques, and, to a lower extent, in flowers.

Its subcellular location is the cytoplasm. Its function is as follows. Acylhydrolase that catalyzes the hydrolysis of 1,3-diacylglycerol (1,3-DAG) and 1-monoacylglycerol (1-MAG) at the sn-1 position. High activity toward 1,3-DAG and 1-MAG, but low activity toward 1,2-diacylglycerol (1,2-DAG) and 1-lysophosphatidylcholine (1-LPC), and no activity toward phosphatidylcholine (PC), monogalactosyldiacylglycerol (MGDG), digalactosyldiacylglycerol (DGDG), triacylglycerol (TAG) and 2-monoacylglycerol (2-MAG). May be involved in the negative regulation of seedling establishment by inhibiting the breakdown, beta-oxidation and mobilization of seed storage oils. The protein is Phospholipase A1-IIgamma (DSEL) of Arabidopsis thaliana (Mouse-ear cress).